The following is a 311-amino-acid chain: Acetyl-coenzyme A carboxylase carboxyl transferase subunit beta (311 aa).

Residues 27–296 (LWTKCGHCSA…AEAADAPEAG (270 aa)) enclose the CoA carboxyltransferase N-terminal domain. Zn(2+) contacts are provided by C31, C34, C50, and C53. The C4-type zinc-finger motif lies at 31 to 53 (CGHCSAVLYRPELERNQEVCPKC). The span at 286–299 (AAEAADAPEAGEQP) shows a compositional bias: low complexity. Residues 286-311 (AAEAADAPEAGEQPSEATDPVGEHWD) are disordered.

The protein belongs to the AccD/PCCB family. In terms of assembly, acetyl-CoA carboxylase is a heterohexamer composed of biotin carboxyl carrier protein (AccB), biotin carboxylase (AccC) and two subunits each of ACCase subunit alpha (AccA) and ACCase subunit beta (AccD). Zn(2+) serves as cofactor.

The protein resides in the cytoplasm. The enzyme catalyses N(6)-carboxybiotinyl-L-lysyl-[protein] + acetyl-CoA = N(6)-biotinyl-L-lysyl-[protein] + malonyl-CoA. It participates in lipid metabolism; malonyl-CoA biosynthesis; malonyl-CoA from acetyl-CoA: step 1/1. Component of the acetyl coenzyme A carboxylase (ACC) complex. Biotin carboxylase (BC) catalyzes the carboxylation of biotin on its carrier protein (BCCP) and then the CO(2) group is transferred by the transcarboxylase to acetyl-CoA to form malonyl-CoA. The polypeptide is Acetyl-coenzyme A carboxylase carboxyl transferase subunit beta (Alkalilimnicola ehrlichii (strain ATCC BAA-1101 / DSM 17681 / MLHE-1)).